The sequence spans 399 residues: Phosphoglycerate kinase (399 aa).

Substrate is bound by residues 20–22 (DFN), Arg-35, 58–61 (HLGR), Arg-117, and Arg-154. ATP is bound by residues Lys-204, Gly-295, Glu-326, and 355 to 358 (GGDS).

It belongs to the phosphoglycerate kinase family. In terms of assembly, monomer.

The protein localises to the cytoplasm. It carries out the reaction (2R)-3-phosphoglycerate + ATP = (2R)-3-phospho-glyceroyl phosphate + ADP. Its pathway is carbohydrate degradation; glycolysis; pyruvate from D-glyceraldehyde 3-phosphate: step 2/5. This is Phosphoglycerate kinase from Beutenbergia cavernae (strain ATCC BAA-8 / DSM 12333 / CCUG 43141 / JCM 11478 / NBRC 16432 / NCIMB 13614 / HKI 0122).